The following is a 278-amino-acid chain: Undecaprenyl-diphosphatase (278 aa).

Transmembrane regions (helical) follow at residues 3-23 (YILIGVILGIVQGISEWIPIS), 42-62 (VAYSFGLFMEIGTIAAAIIYF), 88-108 (FLVIVTIITGLMGVPLYLFVI), 112-132 (ILGLPMTVLGVVLLTDGIIIY), 152-172 (IIIVGIAQGLAALPGVSRSGI), 190-210 (LSFISLIPAALGAIGVTVLFS), 225-245 (GLLISIVVATFVSIFFINALL), and 253-273 (VVVLVIILGIIAIISGILSGI).

Belongs to the UppP family.

The protein localises to the cell membrane. It catalyses the reaction di-trans,octa-cis-undecaprenyl diphosphate + H2O = di-trans,octa-cis-undecaprenyl phosphate + phosphate + H(+). Functionally, catalyzes the dephosphorylation of undecaprenyl diphosphate (UPP). This Saccharolobus islandicus (strain M.14.25 / Kamchatka #1) (Sulfolobus islandicus) protein is Undecaprenyl-diphosphatase.